The following is a 488-amino-acid chain: Catalase (488 aa).

The interval 1 to 26 is disordered; the sequence is MTDRKNLTTNQGVPVGDNQNSMTAGR. A compositionally biased stretch (polar residues) spans 7 to 23; that stretch reads LTTNQGVPVGDNQNSMT. Residues H55 and N128 contribute to the active site. Heme is bound at residue Y338.

Belongs to the catalase family. Requires heme as cofactor.

It is found in the cytoplasm. It catalyses the reaction 2 H2O2 = O2 + 2 H2O. In terms of biological role, decomposes hydrogen peroxide into water and oxygen; serves to protect cells from the toxic effects of hydrogen peroxide. This is Catalase (kat) from Listeria monocytogenes serovar 1/2a (strain ATCC BAA-679 / EGD-e).